The primary structure comprises 3259 residues: Golgin subfamily B member 1 (3259 aa).

Methionine 1 is subject to N-acetylmethionine. Over 1 to 3235 (MLSRLSGLAN…LRSLCHSRTR (3235 aa)) the chain is Cytoplasmic. A phosphoserine mark is found at serine 6, serine 17, serine 138, and serine 528. Residues 48–593 (EDVQERLAYA…RAEEADHEVL (546 aa)) adopt a coiled-coil conformation. The segment at 119 to 142 (GTVLPTEPQSEEQLSKHDKSSTEE) is disordered. The span at 131-142 (QLSKHDKSSTEE) shows a compositional bias: basic and acidic residues. The interval 624–652 (LMPNEESSLPAVEKEQASTEHQSRTSEEI) is disordered. A compositionally biased stretch (basic and acidic residues) spans 635–650 (VEKEQASTEHQSRTSE). Serine 653 carries the post-translational modification Phosphoserine. 3 coiled-coil regions span residues 677 to 1028 (DIGQ…KEIP), 1062 to 1245 (LKQT…ESID), and 1301 to 1779 (GTSV…TEKH). Residues 944–963 (AKKEQVEEDNEVSSGLKQNY) are disordered. Positions 1747–1763 (SEKDSLSEEVQDLKHQI) are enriched in basic and acidic residues. The tract at residues 1747-1829 (SEKDSLSEEV…SANPAVSKDF (83 aa)) is disordered. 2 stretches are compositionally biased toward polar residues: residues 1782 to 1794 (QTNVTEEGTQSIP) and 1802 to 1820 (SLSMSTRPTCSESVPSAKS). Residues 1828–3185 (DFSSHDEINN…EQIRRLEHSE (1358 aa)) adopt a coiled-coil conformation. Serine 2216, serine 2735, serine 2872, and serine 2884 each carry phosphoserine. The segment at 2856-2876 (RKSEEGKQRSAAQPSTSPAEV) is disordered. Residues 2865–2875 (SAAQPSTSPAE) show a composition bias toward polar residues. The interval 2998 to 3021 (TQPLKVQYQRQASPETSASPDGSQ) is disordered. Serine 3037 is subject to Phosphoserine. The segment at 3107–3140 (IDVAPGAPQEKNGVHRKSDPEELREPQQSFSEAQ) is disordered. The segment covering 3118 to 3131 (NGVHRKSDPEELRE) has biased composition (basic and acidic residues). A helical transmembrane segment spans residues 3236–3256 (VPLLAAIYFLMIHVLLILCFT). At 3257–3259 (GHL) the chain is on the lumenal side.

As to quaternary structure, homodimer; disulfide-linked. Interacts with PLK3.

The protein resides in the golgi apparatus membrane. Functionally, may participate in forming intercisternal cross-bridges of the Golgi complex. The polypeptide is Golgin subfamily B member 1 (GOLGB1) (Homo sapiens (Human)).